A 216-amino-acid chain; its full sequence is Ribosomal RNA small subunit methyltransferase G (216 aa).

S-adenosyl-L-methionine-binding positions include Gly-86, Leu-91, 137–138 (VE), and Arg-155.

It belongs to the methyltransferase superfamily. RNA methyltransferase RsmG family.

It is found in the cytoplasm. The enzyme catalyses guanosine(527) in 16S rRNA + S-adenosyl-L-methionine = N(7)-methylguanosine(527) in 16S rRNA + S-adenosyl-L-homocysteine. In terms of biological role, specifically methylates the N7 position of guanine in position 527 of 16S rRNA. In Lawsonia intracellularis (strain PHE/MN1-00), this protein is Ribosomal RNA small subunit methyltransferase G.